We begin with the raw amino-acid sequence, 155 residues long: uncharacterized protein (155 aa).

The region spanning 6–155 (LRIELGEETN…RDMVRLYLDL (150 aa)) is the N-acetyltransferase domain. Residues 69 to 71 (IAV), 77 to 82 (KKGFGK), and 111 to 117 (QLSLYQK) each bind CoA.

Its function is as follows. Probable N-acetyltransferase. This is an uncharacterized protein from Bacillus subtilis (strain 168).